Here is a 205-residue protein sequence, read N- to C-terminus: Adenylate kinase (205 aa).

Gly10–Thr15 lines the ATP pocket. The NMP stretch occupies residues Ser30–Val59. Residues Thr31, Arg36, Glu57–Val59, Gly85–Arg88, and Gln92 each bind AMP. The segment at Thr126–Asp139 is LID. Position 127 (Arg127) interacts with ATP. Residues Arg136 and Arg147 each contribute to the AMP site. Position 175 (Lys175) interacts with ATP.

It belongs to the adenylate kinase family. Monomer.

It localises to the cytoplasm. It carries out the reaction AMP + ATP = 2 ADP. It participates in purine metabolism; AMP biosynthesis via salvage pathway; AMP from ADP: step 1/1. In terms of biological role, catalyzes the reversible transfer of the terminal phosphate group between ATP and AMP. Plays an important role in cellular energy homeostasis and in adenine nucleotide metabolism. The sequence is that of Adenylate kinase from Parvibaculum lavamentivorans (strain DS-1 / DSM 13023 / NCIMB 13966).